Here is a 137-residue protein sequence, read N- to C-terminus: Large-conductance mechanosensitive channel (137 aa).

2 helical membrane-spanning segments follow: residues 15-35 (VDLAVGFILGGAFGTIVTSLV) and 81-101 (GKFINAVISFVIMALALFFVI).

The protein belongs to the MscL family. As to quaternary structure, homopentamer.

The protein localises to the cell inner membrane. Channel that opens in response to stretch forces in the membrane lipid bilayer. May participate in the regulation of osmotic pressure changes within the cell. This is Large-conductance mechanosensitive channel from Hyphomonas neptunium (strain ATCC 15444).